Here is a 118-residue protein sequence, read N- to C-terminus: Putative pterin-4-alpha-carbinolamine dehydratase (118 aa).

The protein belongs to the pterin-4-alpha-carbinolamine dehydratase family.

It carries out the reaction (4aS,6R)-4a-hydroxy-L-erythro-5,6,7,8-tetrahydrobiopterin = (6R)-L-erythro-6,7-dihydrobiopterin + H2O. This Pseudomonas aeruginosa (strain LESB58) protein is Putative pterin-4-alpha-carbinolamine dehydratase.